The primary structure comprises 439 residues: Dolichyl-diphosphooligosaccharide--protein glycosyltransferase 48 kDa subunit (439 aa).

The signal sequence occupies residues 1 to 25 (MELGAAARAWSLLWLLLPLLGLVGA). The Lumenal portion of the chain corresponds to 27–410 (GPRTLVLLDN…YERFIPSAYP (384 aa)). The chain crosses the membrane as a helical span at residues 411–430 (YYASAFSMMVGLFIFSVVFL). Residues 431-439 (HMKEKEKSD) are Cytoplasmic-facing.

This sequence belongs to the DDOST 48 kDa subunit family. Component of the oligosaccharyltransferase (OST) complex. OST exists in two different complex forms which contain common core subunits RPN1, RPN2, OST48, OST4, DAD1 and TMEM258, either STT3A or STT3B as catalytic subunits, and form-specific accessory subunits. STT3A complex assembly occurs through the formation of 3 subcomplexes. Subcomplex 1 contains RPN1 and TMEM258, subcomplex 2 contains the STT3A-specific subunits STT3A, DC2/OSTC, and KCP2 as well as the core subunit OST4, and subcomplex 3 contains RPN2, DAD1, and OST48. The STT3A complex can form stable complexes with the Sec61 complex or with both the Sec61 and TRAP complexes. Interacts with SMIM22.

The protein resides in the endoplasmic reticulum membrane. It participates in protein modification; protein glycosylation. Functionally, subunit of the oligosaccharyl transferase (OST) complex that catalyzes the initial transfer of a defined glycan (Glc(3)Man(9)GlcNAc(2) in eukaryotes) from the lipid carrier dolichol-pyrophosphate to an asparagine residue within an Asn-X-Ser/Thr consensus motif in nascent polypeptide chains, the first step in protein N-glycosylation. N-glycosylation occurs cotranslationally and the complex associates with the Sec61 complex at the channel-forming translocon complex that mediates protein translocation across the endoplasmic reticulum (ER). All subunits are required for a maximal enzyme activity. Required for the assembly of both SST3A- and SS3B-containing OST complexes. This chain is Dolichyl-diphosphooligosaccharide--protein glycosyltransferase 48 kDa subunit, found in Sus scrofa (Pig).